The primary structure comprises 397 residues: tRNA-specific 2-thiouridylase MnmA (397 aa).

Residues 19 to 26 and L45 contribute to the ATP site; that span reads AMSGGVDS. The Nucleophile role is filled by C113. C113 and C210 are disulfide-bonded. G137 lines the ATP pocket. The interaction with tRNA stretch occupies residues 160 to 162; sequence RDQ. The Cysteine persulfide intermediate role is filled by C210.

It belongs to the MnmA/TRMU family.

The protein localises to the cytoplasm. The enzyme catalyses S-sulfanyl-L-cysteinyl-[protein] + uridine(34) in tRNA + AH2 + ATP = 2-thiouridine(34) in tRNA + L-cysteinyl-[protein] + A + AMP + diphosphate + H(+). Its function is as follows. Catalyzes the 2-thiolation of uridine at the wobble position (U34) of tRNA, leading to the formation of s(2)U34. In Rhodopseudomonas palustris (strain ATCC BAA-98 / CGA009), this protein is tRNA-specific 2-thiouridylase MnmA.